Consider the following 501-residue polypeptide: Cytochrome P450 2J4 (501 aa).

Helical transmembrane passes span 12–32 (IWAALHLRTLLVAALTFLLLA) and 77–97 (NIFSLNLGDITSVVITGLPLI). Cysteine 447 lines the heme pocket.

Belongs to the cytochrome P450 family. It depends on heme as a cofactor. As to expression, expressed in small intestinal enterocytes (at protein level). In the intestinal crypt, expressed at higher levels in the mature villous cells than in undifferentiated crypt cells (at protein level). Expressed in liver, kidney, lung, and olfactory mucosa (at protein level).

The protein localises to the endoplasmic reticulum membrane. It is found in the microsome membrane. It carries out the reaction an organic molecule + reduced [NADPH--hemoprotein reductase] + O2 = an alcohol + oxidized [NADPH--hemoprotein reductase] + H2O + H(+). It catalyses the reaction (5Z,8Z,11Z,14Z)-eicosatetraenoate + reduced [NADPH--hemoprotein reductase] + O2 = 19-hydroxy-(5Z,8Z,11Z,14Z)-eicosatetraenoate + oxidized [NADPH--hemoprotein reductase] + H2O + H(+). The enzyme catalyses all-trans-retinal + reduced [NADPH--hemoprotein reductase] + O2 = all-trans-retinoate + oxidized [NADPH--hemoprotein reductase] + H2O + 2 H(+). The catalysed reaction is 9-cis-retinal + reduced [NADPH--hemoprotein reductase] + O2 = 9-cis-retinoate + oxidized [NADPH--hemoprotein reductase] + H2O + 2 H(+). It participates in lipid metabolism; arachidonate metabolism. Its pathway is cofactor metabolism; retinol metabolism. Functionally, a cytochrome P450 monooxygenase that may play a major role in intestinal retinoid metabolism. Catalyzes the oxidative transformation of all-trans retinal and 9-cis-retinal to the corresponding active forms all-trans and 9-cis retinoic acids. Catalyzes the hydroxylation of carbon-hydrogen bonds. Hydroxylates arachidonic acid predominantly at the omega-1 position. Mechanistically, uses molecular oxygen inserting one oxygen atom into a substrate, and reducing the second into a water molecule, with two electrons provided by NADPH via cytochrome P450 reductase (CPR; NADPH--hemoprotein reductase). The chain is Cytochrome P450 2J4 from Rattus norvegicus (Rat).